Here is a 229-residue protein sequence, read N- to C-terminus: Cytidylate kinase (229 aa).

12-20 provides a ligand contact to ATP; it reads GPSGVGKST.

The protein belongs to the cytidylate kinase family. Type 1 subfamily.

It is found in the cytoplasm. The catalysed reaction is CMP + ATP = CDP + ADP. It catalyses the reaction dCMP + ATP = dCDP + ADP. In Mesomycoplasma hyopneumoniae (strain 7448) (Mycoplasma hyopneumoniae), this protein is Cytidylate kinase.